We begin with the raw amino-acid sequence, 434 residues long: Ribosomal protein uS12 methylthiotransferase RimO (434 aa).

In terms of domain architecture, MTTase N-terminal spans 6–122 (NRVFLLSLGC…ILTAIGARYR (117 aa)). Residues C15, C51, C85, C146, C150, and C153 each contribute to the [4Fe-4S] cluster site. In terms of domain architecture, Radical SAM core spans 132-361 (TAPGHTSFLK…MELQEGISEE (230 aa)). A TRAM domain is found at 364 to 431 (KRLEGREIAV…PYELFGTVLK (68 aa)).

Belongs to the methylthiotransferase family. RimO subfamily. [4Fe-4S] cluster is required as a cofactor.

The protein resides in the cytoplasm. It catalyses the reaction L-aspartate(89)-[ribosomal protein uS12]-hydrogen + (sulfur carrier)-SH + AH2 + 2 S-adenosyl-L-methionine = 3-methylsulfanyl-L-aspartate(89)-[ribosomal protein uS12]-hydrogen + (sulfur carrier)-H + 5'-deoxyadenosine + L-methionine + A + S-adenosyl-L-homocysteine + 2 H(+). In terms of biological role, catalyzes the methylthiolation of an aspartic acid residue of ribosomal protein uS12. This chain is Ribosomal protein uS12 methylthiotransferase RimO, found in Chlorobium phaeovibrioides (strain DSM 265 / 1930) (Prosthecochloris vibrioformis (strain DSM 265)).